A 248-amino-acid chain; its full sequence is Transcriptional activator protein FnrL (248 aa).

An HTH crp-type domain is found at 154–232 (KTAREKIASL…KRHVIVTDFA (79 aa)). Residues 191 to 210 (REEMADYLGLTLETVSRQVS) constitute a DNA-binding region (H-T-H motif).

In terms of biological role, anaerobic regulatory protein; transcriptional activator of hemA. Appears to regulate other genes. The sequence is that of Transcriptional activator protein FnrL (fnrL) from Cereibacter sphaeroides (strain ATCC 17023 / DSM 158 / JCM 6121 / CCUG 31486 / LMG 2827 / NBRC 12203 / NCIMB 8253 / ATH 2.4.1.) (Rhodobacter sphaeroides).